A 315-amino-acid chain; its full sequence is Zinc finger transcription factor ref-2 (315 aa).

A C2H2-type 1; atypical zinc finger spans residues 83-112 (VQCLWETNGQVCMHVCQNSGELSTHISSNH). A C2H2-type 2; degenerate zinc finger spans residues 124 to 146 (KGCDREFKMFKAKYKLVNHMRVH). 3 C2H2-type zinc fingers span residues 152 to 174 (FLCDVCNKVFARSENLKIHKRIH), 180 to 204 (FQCTHNGCTKLFANSSDRKKHMHVH), and 210 to 234 (YSCMYPDCGKTYTHPSSLRKHTKVH). The disordered stretch occupies residues 225-270 (SSLRKHTKVHENEKKSQLSPEHDESSDSGNASIGTPTTDESLTFSP). Positions 233 to 249 (VHENEKKSQLSPEHDES) are enriched in basic and acidic residues. The segment covering 251-270 (DSGNASIGTPTTDESLTFSP) has biased composition (polar residues).

As to quaternary structure, interacts with TCF transcription factor pop-1; the interaction is direct and facilitates transcriptional activation; transcription may be repressed by beta-catenin/sys-1.

The protein localises to the nucleus. Its subcellular location is the cytoplasm. Transcription factor. Modulates expression of target genes by binding to regulatory elements. Required for normal cell division timing and cell positioning in anterior lineages, acting in a cell-autonomous manner. Required for development, fusion and fate of cells of the ventral epidermis, the Pn.p cells, during larval development; acts in concert with homeobox genes lin-39 and mab-5. Required for the specification of the AIY interneuron. In complex with TCF transcription factor pop-1, positively modulates expression of LIM/homeobox protein ttx-3 in anterior daughter cells of the SMDD/AIY neuron lineage. In Caenorhabditis elegans, this protein is Zinc finger transcription factor ref-2.